We begin with the raw amino-acid sequence, 226 residues long: Phosphatidylserine decarboxylase proenzyme (226 aa).

The Schiff-base intermediate with substrate; via pyruvic acid role is filled by Ser184. Ser184 carries the post-translational modification Pyruvic acid (Ser); by autocatalysis.

This sequence belongs to the phosphatidylserine decarboxylase family. PSD-A subfamily. Heterodimer of a large membrane-associated beta subunit and a small pyruvoyl-containing alpha subunit. Requires pyruvate as cofactor. Post-translationally, is synthesized initially as an inactive proenzyme. Formation of the active enzyme involves a self-maturation process in which the active site pyruvoyl group is generated from an internal serine residue via an autocatalytic post-translational modification. Two non-identical subunits are generated from the proenzyme in this reaction, and the pyruvate is formed at the N-terminus of the alpha chain, which is derived from the carboxyl end of the proenzyme. The post-translation cleavage follows an unusual pathway, termed non-hydrolytic serinolysis, in which the side chain hydroxyl group of the serine supplies its oxygen atom to form the C-terminus of the beta chain, while the remainder of the serine residue undergoes an oxidative deamination to produce ammonia and the pyruvoyl prosthetic group on the alpha chain.

The protein resides in the cell membrane. The catalysed reaction is a 1,2-diacyl-sn-glycero-3-phospho-L-serine + H(+) = a 1,2-diacyl-sn-glycero-3-phosphoethanolamine + CO2. Its pathway is phospholipid metabolism; phosphatidylethanolamine biosynthesis; phosphatidylethanolamine from CDP-diacylglycerol: step 2/2. Functionally, catalyzes the formation of phosphatidylethanolamine (PtdEtn) from phosphatidylserine (PtdSer). In Ehrlichia chaffeensis (strain ATCC CRL-10679 / Arkansas), this protein is Phosphatidylserine decarboxylase proenzyme.